A 475-amino-acid polypeptide reads, in one-letter code: tRNA-2-methylthio-N(6)-dimethylallyladenosine synthase (475 aa).

Positions 2 to 119 (AKLHITTWGC…LPEMINKIRG (118 aa)) constitute an MTTase N-terminal domain. [4Fe-4S] cluster contacts are provided by Cys11, Cys48, Cys82, Cys156, Cys160, and Cys163. A Radical SAM core domain is found at 142-374 (RAEGPTAFVS…QQRINHQAMQ (233 aa)). One can recognise a TRAM domain in the interval 377–440 (RAMLGTEQRV…TNSLRGEVVR (64 aa)).

The protein belongs to the methylthiotransferase family. MiaB subfamily. In terms of assembly, monomer. Requires [4Fe-4S] cluster as cofactor.

It is found in the cytoplasm. The catalysed reaction is N(6)-dimethylallyladenosine(37) in tRNA + (sulfur carrier)-SH + AH2 + 2 S-adenosyl-L-methionine = 2-methylsulfanyl-N(6)-dimethylallyladenosine(37) in tRNA + (sulfur carrier)-H + 5'-deoxyadenosine + L-methionine + A + S-adenosyl-L-homocysteine + 2 H(+). Functionally, catalyzes the methylthiolation of N6-(dimethylallyl)adenosine (i(6)A), leading to the formation of 2-methylthio-N6-(dimethylallyl)adenosine (ms(2)i(6)A) at position 37 in tRNAs that read codons beginning with uridine. The polypeptide is tRNA-2-methylthio-N(6)-dimethylallyladenosine synthase (Actinobacillus pleuropneumoniae serotype 3 (strain JL03)).